We begin with the raw amino-acid sequence, 161 residues long: MPSFDIVSKTDLAEVQNAIDGVLRELQNRFDFKGSKSTIERKENEITLHTEDKTKLSQLQEMVKGYFVRRKLDPGALDWGREENAAGGTLRQVVTVRQGIDQDLAKKIVKAVKDSKMKVQASIQGDELRITGKKIDDLQECIRLVKGLKIEQPLQYVNFRD.

The protein belongs to the YajQ family.

Functionally, nucleotide-binding protein. The chain is Nucleotide-binding protein RC1_3464 from Rhodospirillum centenum (strain ATCC 51521 / SW).